The sequence spans 539 residues: RING finger protein 37 (539 aa).

Positions 226–249 (PALPMESDCDPGGQSESQHSPCTL) are disordered. The span at 239 to 249 (QSESQHSPCTL) shows a compositional bias: polar residues. Residues 258 to 338 (DVPEEFLDPI…DRFLLQHSIS (81 aa)) enclose the U-box domain. Disordered stretches follow at residues 359 to 399 (LPSR…EPTA) and 456 to 479 (GTRGSSACRRPASSSEHPRSVSGP). The segment covering 374–395 (HYSLGMSASSSATSPLFSPTTS) has biased composition (low complexity). Residues 481 to 526 (CASCKQAFSSYSTNEPVYQLPCGHLLCRPCLSEKQRSQPMMCTACR) form an RING-type zinc finger.

As to quaternary structure, interacts with UBE2L3. Interacts with VCP. In terms of tissue distribution, expressed in testis and placenta.

It is found in the nucleus. The catalysed reaction is S-ubiquitinyl-[E2 ubiquitin-conjugating enzyme]-L-cysteine + [acceptor protein]-L-lysine = [E2 ubiquitin-conjugating enzyme]-L-cysteine + N(6)-ubiquitinyl-[acceptor protein]-L-lysine.. The protein operates within protein modification; protein ubiquitination. In terms of biological role, may have a ubiquitin-protein ligase activity acting as an E3 ubiquitin-protein ligase or as a ubiquitin-ubiquitin ligase promoting elongation of ubiquitin chains on substrates. The polypeptide is RING finger protein 37 (Ubox5) (Mus musculus (Mouse)).